We begin with the raw amino-acid sequence, 1640 residues long: Phospholipase D C (1640 aa).

Residues 122–132 (SHRSNQSFNHS) show a composition bias toward polar residues. Disordered stretches follow at residues 122–247 (SHRS…KRLS), 264–283 (HNQN…HTTT), 439–499 (EKQQ…YKYN), and 521–541 (DDEY…PSQE). The span at 133-193 (NSTTPLNTTN…YSSDNSYLHN (61 aa)) shows a compositional bias: low complexity. The segment covering 197–231 (DIYEDEDDEDDEDDDDDEDEDDEGKEFEQDDEDES) has biased composition (acidic residues). A compositionally biased stretch (polar residues) spans 232–247 (TISSMSLKNSQAKRLS). Composition is skewed to low complexity over residues 264 to 273 (HNQNHQNHQN) and 467 to 499 (TTTT…YKYN). The segment covering 521–534 (DDEYYYGEYDDEDD) has biased composition (acidic residues). One can recognise a PLD phosphodiesterase 1 domain in the interval 1009-1036 (LYWSHHQKVVVVDQRIAFIGGLDLCFGR). Catalysis depends on residues H1014, K1016, and D1021. Composition is skewed to low complexity over residues 1149–1274 (INNN…NNLN) and 1282–1296 (HNNS…QQQQ). The segment at 1149 to 1315 (INNNNNNANN…YQPPLPPQQR (167 aa)) is disordered. Over residues 1297–1306 (QHHHHHHHHY) the composition is skewed to basic residues. The 28-residue stretch at 1460 to 1487 (EQIYVHSKVLIVDDKIAIIGSANINDRS) folds into the PLD phosphodiesterase 2 domain. Catalysis depends on residues H1465, K1467, and D1472.

This sequence belongs to the phospholipase D family.

It catalyses the reaction a 1,2-diacyl-sn-glycero-3-phosphocholine + H2O = a 1,2-diacyl-sn-glycero-3-phosphate + choline + H(+). With respect to regulation, inhibited by butan-1-ol. Functionally, plays a role in cell growth. Hydrolyzes membrane phospholipids, such as PtdCho (phosphatidylcholine), producing the free headgroup and PtdOH (phosphatidic acid; signaling molecule on its own). Involved in the inhibition of actin-based motility and endocytosis. Its inhibition causes complete collapse of F-actin organization. This is Phospholipase D C (pldC) from Dictyostelium discoideum (Social amoeba).